The sequence spans 185 residues: dCTP deaminase (185 aa).

DCTP-binding positions include 107-112 (KSTYAR), 131-133 (TLE), Q152, Y166, and Q176. Residue E133 is the Proton donor/acceptor of the active site.

It belongs to the dCTP deaminase family. As to quaternary structure, homotrimer.

The catalysed reaction is dCTP + H2O + H(+) = dUTP + NH4(+). The protein operates within pyrimidine metabolism; dUMP biosynthesis; dUMP from dCTP (dUTP route): step 1/2. Its function is as follows. Catalyzes the deamination of dCTP to dUTP. This is dCTP deaminase from Wolbachia pipientis wMel.